The chain runs to 859 residues: DNA mismatch repair protein MutS (859 aa).

615–622 (GPNMGGKS) contacts ATP.

The protein belongs to the DNA mismatch repair MutS family.

Functionally, this protein is involved in the repair of mismatches in DNA. It is possible that it carries out the mismatch recognition step. This protein has a weak ATPase activity. The protein is DNA mismatch repair protein MutS of Chromohalobacter salexigens (strain ATCC BAA-138 / DSM 3043 / CIP 106854 / NCIMB 13768 / 1H11).